The sequence spans 407 residues: Tryptophan synthase beta chain (407 aa).

Lys-86 carries the post-translational modification N6-(pyridoxal phosphate)lysine.

The protein belongs to the TrpB family. As to quaternary structure, tetramer of two alpha and two beta chains. Requires pyridoxal 5'-phosphate as cofactor.

It catalyses the reaction (1S,2R)-1-C-(indol-3-yl)glycerol 3-phosphate + L-serine = D-glyceraldehyde 3-phosphate + L-tryptophan + H2O. It participates in amino-acid biosynthesis; L-tryptophan biosynthesis; L-tryptophan from chorismate: step 5/5. The beta subunit is responsible for the synthesis of L-tryptophan from indole and L-serine. The polypeptide is Tryptophan synthase beta chain (Shewanella woodyi (strain ATCC 51908 / MS32)).